Consider the following 157-residue polypeptide: Transcription elongation factor GreA (157 aa).

This sequence belongs to the GreA/GreB family.

Its function is as follows. Necessary for efficient RNA polymerase transcription elongation past template-encoded arresting sites. The arresting sites in DNA have the property of trapping a certain fraction of elongating RNA polymerases that pass through, resulting in locked ternary complexes. Cleavage of the nascent transcript by cleavage factors such as GreA or GreB allows the resumption of elongation from the new 3'terminus. GreA releases sequences of 2 to 3 nucleotides. The sequence is that of Transcription elongation factor GreA from Phenylobacterium zucineum (strain HLK1).